Reading from the N-terminus, the 141-residue chain is Zinc finger HIT domain-containing protein 3 (141 aa).

An HIT-type; degenerate zinc finger spans residues 1-28; it reads LEKPKYRCPACRVPYCSVACFRKHKEQC. Residues Cys8, Cys11, His24, and Cys28 each coordinate Zn(2+). Ser66 is modified (phosphoserine).

Thyroid receptor interacting proteins (TRIPs) specifically interact with the ligand binding domain of the thyroid receptor (TR). Requires the presence of thyroid hormone for its interaction. Interacts with NUFIP1. Interacts (via HIT-type zinc finger) with the RUVBL1/RUVBL2 complex in the presence of ADP.

It is found in the cytoplasm. It localises to the nucleus. This chain is Zinc finger HIT domain-containing protein 3 (ZNHIT3), found in Pan troglodytes (Chimpanzee).